A 424-amino-acid chain; its full sequence is Isoflavipucine cluster transcription factor ATEG_00326 (424 aa).

Positions 10–38 form a DNA-binding region, zn(2)-C6 fungal-type; that stretch reads CDRCHGQKLRCIHSGGGPCVRCAKAKATC. The segment at 265–286 is disordered; the sequence is ARMQTPEGTPERTSESSPSGPP.

The protein localises to the nucleus. In terms of biological role, transcription factor that regulates the expression of the gene cluster that mediates the biosynthesis of isoflavipucine. The polypeptide is Isoflavipucine cluster transcription factor ATEG_00326 (Aspergillus terreus (strain NIH 2624 / FGSC A1156)).